A 192-amino-acid polypeptide reads, in one-letter code: Erythropoietin (192 aa).

Residues Met1–Cys26 form the signal peptide. Cys33 and Cys187 are disulfide-bonded. 3 N-linked (GlcNAc...) asparagine glycosylation sites follow: Asn50, Asn64, and Asn109.

This sequence belongs to the EPO/TPO family. Produced by kidney or liver of adult mammals and by liver of fetal or neonatal mammals.

It localises to the secreted. Its function is as follows. Hormone involved in the regulation of erythrocyte proliferation and differentiation and the maintenance of a physiological level of circulating erythrocyte mass. Binds to EPOR leading to EPOR dimerization and JAK2 activation thereby activating specific downstream effectors, including STAT1 and STAT3. This is Erythropoietin (Epo) from Mus musculus (Mouse).